Consider the following 254-residue polypeptide: Type III pantothenate kinase (254 aa).

6–13 (DVGNTNTT) contributes to the ATP binding site. Substrate contacts are provided by residues Tyr-100 and 107–110 (GADR). Residue Asp-109 is the Proton acceptor of the active site. Asp-129 lines the K(+) pocket. Thr-132 contributes to the ATP binding site. Thr-184 is a binding site for substrate.

It belongs to the type III pantothenate kinase family. As to quaternary structure, homodimer. Requires NH4(+) as cofactor. The cofactor is K(+).

Its subcellular location is the cytoplasm. The enzyme catalyses (R)-pantothenate + ATP = (R)-4'-phosphopantothenate + ADP + H(+). It participates in cofactor biosynthesis; coenzyme A biosynthesis; CoA from (R)-pantothenate: step 1/5. Its function is as follows. Catalyzes the phosphorylation of pantothenate (Pan), the first step in CoA biosynthesis. This Anaeromyxobacter dehalogenans (strain 2CP-C) protein is Type III pantothenate kinase.